The following is a 152-amino-acid chain: MSQLCPCGSAVEYSLCCHPYVSGEKVAPDPEHLMRSRYCAFVMQDADYLIKTWHPSCGAAALRAELMAGFAHTEWLGLTVFEHCWQDADNIGFVSFVARFTEGGKTGAIIERSRFLKENGQWYYIDGTRPQFGRNDPCPCGSGKKFKKCCGQ.

This sequence belongs to the UPF0225 family.

This is UPF0225 protein YchJ from Shigella boydii serotype 18 (strain CDC 3083-94 / BS512).